Here is a 323-residue protein sequence, read N- to C-terminus: DNA-directed RNA polymerase subunit alpha (323 aa).

Residues 1–233 (MGQEKVTVST…DLFIPFFHAE (233 aa)) form an alpha N-terminal domain (alpha-NTD) region. The segment at 264-323 (IALKYIYIDQSELPPRVYNCLKRSNINTFLELLNNSQEELMKIQDFRIEDVKHILDVLEI) is alpha C-terminal domain (alpha-CTD).

This sequence belongs to the RNA polymerase alpha chain family. In plastids the minimal PEP RNA polymerase catalytic core is composed of four subunits: alpha, beta, beta', and beta''. When a (nuclear-encoded) sigma factor is associated with the core the holoenzyme is formed, which can initiate transcription.

The protein resides in the plastid. Its subcellular location is the chloroplast. It carries out the reaction RNA(n) + a ribonucleoside 5'-triphosphate = RNA(n+1) + diphosphate. Functionally, DNA-dependent RNA polymerase catalyzes the transcription of DNA into RNA using the four ribonucleoside triphosphates as substrates. In Morus indica (Mulberry), this protein is DNA-directed RNA polymerase subunit alpha.